The primary structure comprises 266 residues: Tryptophan synthase alpha chain (266 aa).

Residues Glu47 and Asp58 each act as proton acceptor in the active site.

Belongs to the TrpA family. Tetramer of two alpha and two beta chains.

It catalyses the reaction (1S,2R)-1-C-(indol-3-yl)glycerol 3-phosphate + L-serine = D-glyceraldehyde 3-phosphate + L-tryptophan + H2O. It functions in the pathway amino-acid biosynthesis; L-tryptophan biosynthesis; L-tryptophan from chorismate: step 5/5. Its function is as follows. The alpha subunit is responsible for the aldol cleavage of indoleglycerol phosphate to indole and glyceraldehyde 3-phosphate. This Leptospira biflexa serovar Patoc (strain Patoc 1 / Ames) protein is Tryptophan synthase alpha chain.